The following is an 81-amino-acid chain: U6-theraphotoxin-Hs1a (81 aa).

The signal sequence occupies residues 1 to 21 (MKASMFLALAGLVLLFVVCYA). Residues 22–48 (SESEEKEFPRELLSTIFAVDDFKGEER) constitute a propeptide that is removed on maturation. Cystine bridges form between Cys-50/Cys-65 and Cys-57/Cys-70.

The protein belongs to the neurotoxin 10 (Hwtx-1) family. 51 (Hntx-8) subfamily. Expressed by the venom gland.

The protein localises to the secreted. In terms of biological role, binds to the nicotinic acetylcholine receptor. Blocks neuromuscular transmission. The protein is U6-theraphotoxin-Hs1a of Cyriopagopus schmidti (Chinese bird spider).